A 981-amino-acid polypeptide reads, in one-letter code: RNA polymerase II assembly factor RTP1 (981 aa).

HEAT repeat units follow at residues S64–I101, D161–G199, Y226–E261, K366–G403, K609–T646, S655–S692, I765–L799, E800–Q836, and E945–S980. Over residues Q630–P651 the composition is skewed to acidic residues. Residues Q630–N652 are disordered.

Belongs to the Tango6 family. As to quaternary structure, interacts with RNA polymerase II subunits RPB2 and RPB3. Interacts with the R2TP complex. Interacts with the nuclear pore complex subunits NUP100 and NUP116.

The protein localises to the cytoplasm. In terms of biological role, required for the cytoplasmic assembly and the nuclear import of RNA polymerase II. May facilitate the starting interaction between RNA polymerase II subunits RPB2 and RPB3 and the subsequent interaction of the resulting complex with subunit RPB1. May also participate in the transport of RNA polymerase II through the nuclear pore complex. The chain is RNA polymerase II assembly factor RTP1 from Saccharomyces cerevisiae (strain ATCC 204508 / S288c) (Baker's yeast).